The primary structure comprises 1501 residues: Ribulose bisphosphate carboxylase (1501 aa).

Asparagine 111 is a substrate binding site. Lysine 166 acts as the Proton acceptor in catalysis. Lysine 168 provides a ligand contact to substrate. Residues lysine 191, aspartate 193, and glutamate 194 each coordinate Mg(2+). N6-carboxylysine is present on lysine 191. Histidine 287 serves as the catalytic Proton acceptor. 3 residues coordinate substrate: arginine 288, histidine 321, and serine 368. Positions serine 486 to alanine 508 are cleaved as a propeptide — linker. Asparagine 619 provides a ligand contact to substrate. The Proton acceptor role is filled by lysine 674. Lysine 676 is a binding site for substrate. Positions 699, 701, and 702 each coordinate Mg(2+). An N6-carboxylysine modification is found at lysine 699. Histidine 795 functions as the Proton acceptor in the catalytic mechanism. Residues arginine 796, histidine 829, and serine 876 each coordinate substrate. The propeptide at serine 994–alanine 1016 is linker. Residue asparagine 1127 coordinates substrate. Lysine 1182 (proton acceptor) is an active-site residue. A substrate-binding site is contributed by lysine 1184. Mg(2+) is bound by residues lysine 1207, aspartate 1209, and glutamate 1210. Lysine 1207 carries the N6-carboxylysine modification. The active-site Proton acceptor is histidine 1303. Arginine 1304, histidine 1337, and serine 1384 together coordinate substrate.

It belongs to the RuBisCO large chain family. Type II subfamily. In terms of assembly, homodimer. Mg(2+) serves as cofactor.

Its subcellular location is the plastid. The protein localises to the chloroplast. It catalyses the reaction 2 (2R)-3-phosphoglycerate + 2 H(+) = D-ribulose 1,5-bisphosphate + CO2 + H2O. The catalysed reaction is D-ribulose 1,5-bisphosphate + O2 = 2-phosphoglycolate + (2R)-3-phosphoglycerate + 2 H(+). Its function is as follows. RuBisCO catalyzes two reactions: the carboxylation of D-ribulose 1,5-bisphosphate, the primary event in carbon dioxide fixation, as well as the oxidative fragmentation of the pentose substrate. Both reactions occur simultaneously and in competition at the same active site. This is Ribulose bisphosphate carboxylase (rbcL) from Symbiodinium sp. (Dinoflagellate).